We begin with the raw amino-acid sequence, 2472 residues long: Nuclear receptor corepressor 2 (2472 aa).

3 disordered regions span residues 1-20 (MSGS…PRYP), 47-168 (RDYT…SRLS), and 190-220 (ISKL…PPIE). Arg18 is subject to Asymmetric dimethylarginine. Residues 51 to 60 (SHLSPGSIIQ) are compositionally biased toward polar residues. Residues Ser54 and Ser67 each carry the phosphoserine modification. 2 stretches are compositionally biased toward basic and acidic residues: residues 78–88 (RSQELHLRPES) and 96–112 (GKPD…RLEL). Ser149 and Ser152 each carry phosphoserine. Residues 165-207 (SRLSKEELIQNMDRVDREITMVEQQISKLKKKQQQLEEEAAKP) are a coiled coil. Positions 203–212 (EAAKPPEPEK) are enriched in basic and acidic residues. Ser215 is modified (phosphoserine). Positions 254–312 (LPLYNQPSDTRQYHENIKINQAMRKKLILYFKRRNHARKQWEQRFCQRYDQLMEAWEKK) are interaction with SIN3A/B. Residues 389–480 (MRQLAVIPPM…YLTKKNENYK (92 aa)) are deacetylase activation domain (DAD). The SANT 1 domain occupies 427–478 (QVTNMWSEQERDTFREKFMQHPKNFGLIASFLERKTVAECVLYYYLTKKNEN). The 1D-myo-inositol 1,4,5,6-tetrakisphosphate site is built by Lys449, Tyr470, and Tyr471. Disordered regions lie at residues 487-618 (YRRR…EMET), 665-1107 (HKLK…RPPI), and 1173-1197 (SATS…YRGS). Positions 492–560 (KSQQQQQQQQ…GEDNDEKEAV (69 aa)) form a coiled coil. Residue Ser493 is modified to Phosphoserine. Over residues 494–507 (QQQQQQQQQQQQQQ) the composition is skewed to low complexity. Residues 512–548 (SQEEKEEKEKEKEADKEEEKQDAENEKEELSKEKTDD) are compositionally biased toward basic and acidic residues. Position 549 is a phosphothreonine (Thr549). Ser550 carries the phosphoserine modification. The span at 592-609 (ATPQQSSELASMEMNESS) shows a compositional bias: polar residues. The SANT 2 domain occupies 606-657 (NESSRWTEEEMETAKKGLLEHGRNWSAIARMVGSKTVSQCKNFYFNYKKRQN). Positions 658 to 682 (LDEILQQHKLKMEKERNARRKKKKT) form a coiled coil. The segment covering 709-718 (NEEELAEEAE) has biased composition (acidic residues). The segment covering 739 to 750 (VNNSSDTESVPS) has biased composition (polar residues). 2 positions are modified to phosphoserine: Ser747 and Ser750. 2 stretches are compositionally biased toward pro residues: residues 773–782 (TQPPVPPPEE) and 789–811 (EPSP…PAAP). 2 stretches are compositionally biased toward basic and acidic residues: residues 831 to 850 (EDAK…KPEE) and 859 to 868 (ESVKSDHKEE). Lys878 is modified (N6-acetyllysine). The span at 905-919 (GSSSGATQDSDSSAT) shows a compositional bias: low complexity. At Ser938 the chain carries Phosphoserine. Thr945 is modified (phosphothreonine). Phosphoserine is present on Ser955. Lys958 carries the N6-acetyllysine modification. Basic and acidic residues predominate over residues 978–988 (KVHEPPREDTV). The span at 989–1000 (PPKPVPPVPPPT) shows a compositional bias: pro residues. Over residues 1090–1101 (LPLGLHDSARPV) the composition is skewed to low complexity. An N6-acetyllysine mark is found at Lys1181 and Lys1209. Phosphoserine is present on Ser1220. Disordered regions lie at residues 1254-1277 (SVSQ…AAPK), 1345-1378 (LKRE…LKLK), and 1410-1443 (PLAP…KHDV). Position 1350 is a phosphothreonine (Thr1350). The segment covering 1359–1368 (DLTETYKPRP) has biased composition (basic and acidic residues). Phosphoserine occurs at positions 1449, 1509, and 1565. Residues 1479–1578 (KSRSGTSSGA…TVPEHHPHPI (100 aa)) form a disordered region. Arg1624 carries the post-translational modification Asymmetric dimethylarginine. The segment at 1734-1826 (TAPPPFSSRH…PISPRTQDAL (93 aa)) is disordered. A compositionally biased stretch (low complexity) spans 1740 to 1753 (SSRHSSSPLSPGGP). Ser1746 and Ser1749 each carry phosphoserine. Residues 1765-1778 (SERERERERERDKS) are compositionally biased toward basic and acidic residues. Positions 1807 to 1826 (RPASHTHQHSPISPRTQDAL) are enriched in polar residues. Position 1819 is a phosphoserine (Ser1819). The residue at position 1854 (Arg1854) is an Omega-N-methylarginine. 3 disordered regions span residues 1857–1878 (RSTS…THCP), 1898–1986 (KETS…KPFS), and 2001–2078 (AGYS…LQTA). Residues 1899–1913 (ETSRVARPERPRVDA) show a composition bias toward basic and acidic residues. Lys1920 is modified (N6-acetyllysine). Residues 1925 to 1938 (EPASSPSKSSEPRS) are compositionally biased toward low complexity. At Ser1963 the chain carries Phosphoserine. Residue Lys1983 is modified to N6-acetyllysine. Phosphoserine is present on residues Ser2004, Ser2012, Ser2015, Ser2016, and Ser2018. At Thr2020 the chain carries Phosphothreonine. Residues 2020–2043 (THDKGLSKPLEELEKSHLEGELRH) are compositionally biased toward basic and acidic residues. Ser2035 is modified (phosphoserine). Low complexity predominate over residues 2064-2075 (LPESQPSSSPLL). Residues 2086-2090 (RVVTL) are required for interaction with RARA in the absence of its ligand. Positions 2094 to 2098 (ISEVI) match the CORNR box of ID1 motif. Residues 2132-2226 (RRPPSDLYLP…GNTSQPPAFF (95 aa)) form a disordered region. Residues Ser2161, Ser2181, and Ser2215 each carry the phosphoserine modification. The CORNR box of ID2 signature appears at 2296 to 2300 (LEAII). The disordered stretch occupies residues 2343–2459 (GRSDHALTSP…HHAWDEEPKP (117 aa)). Ser2371 is modified (phosphoserine). The span at 2439-2450 (LAAGSGPLAGPH) shows a compositional bias: low complexity.

Belongs to the N-CoR nuclear receptor corepressors family. As to quaternary structure, forms a large corepressor complex that contains SIN3A/B and histone deacetylases HDAC1 and HDAC2. This complex associates with the thyroid (TR) and the retinoid acid receptors (RAR) in the absence of ligand, and may stabilize their interaction with TFIIB. Interacts directly with RARA in the absence of ligand; the interaction represses RARA activity. Interacts (isoform SMRT) with HDAC10. Interacts with MINT. Component of the N-Cor repressor complex, at least composed of NCOR1, NCOR2, HDAC3, TBL1X, TBL1R, CORO2A and GPS2. Interacts with CBFA2T3 and ATXN1L. Interacts with RARB; the interaction is weak and does not repress RARB transactivational activity. Interacts (via 1D-myo-inositol 1,4,5,6-tetrakisphosphate) with HDAC3; promoting the histone deacetylase activity of HDAC3. Interacts with HDAC7 and C1D. Interacts with NR4A2; this interaction increases in the absence of PITX3. Interacts with BCL6 (via the BTB domain), required for BCL6 transcriptional repressor activity on a subset of target genes. Forms ternary complexes with BCOR and BCL6 on target gene promoters but, on enhancer elements, interacts with BCL6 and HDAC3 to repress proximal gene expression. May interact with DEAF1. Interacts with RXRA. Interacts with MECP2. Interacts with ZBTB7A. Interacts with AR. Interacts with TBL1Y. Interacts with SANBR (via the BTB domain). As to expression, ubiquitous. Also widely expressed in early embryos.

It is found in the nucleus. In terms of biological role, transcriptional corepressor that mediates the transcriptional repression activity of some nuclear receptors by promoting chromatin condensation, thus preventing access of the basal transcription. Acts by recruiting chromatin modifiers, such as histone deacetylases HDAC1, HDAC2 and HDAC3. Required to activate the histone deacetylase activity of HDAC3. Involved in the regulation BCL6-dependent of the germinal center (GC) reactions, mainly through the control of the GC B-cells proliferation and survival. Recruited by ZBTB7A to the androgen response elements/ARE on target genes, negatively regulates androgen receptor signaling and androgen-induced cell proliferation. The protein is Nuclear receptor corepressor 2 (Ncor2) of Mus musculus (Mouse).